The primary structure comprises 352 residues: Protein RecA (352 aa).

67-74 lines the ATP pocket; the sequence is GPESSGKT.

The protein belongs to the RecA family.

It localises to the cytoplasm. Functionally, can catalyze the hydrolysis of ATP in the presence of single-stranded DNA, the ATP-dependent uptake of single-stranded DNA by duplex DNA, and the ATP-dependent hybridization of homologous single-stranded DNAs. It interacts with LexA causing its activation and leading to its autocatalytic cleavage. The protein is Protein RecA of Chlamydia trachomatis serovar D (strain ATCC VR-885 / DSM 19411 / UW-3/Cx).